A 1373-amino-acid polypeptide reads, in one-letter code: DNA-directed RNA polymerase subunit beta (1373 aa).

Belongs to the RNA polymerase beta chain family. As to quaternary structure, the RNAP catalytic core consists of 2 alpha, 1 beta, 1 beta' and 1 omega subunit. When a sigma factor is associated with the core the holoenzyme is formed, which can initiate transcription.

The enzyme catalyses RNA(n) + a ribonucleoside 5'-triphosphate = RNA(n+1) + diphosphate. Its function is as follows. DNA-dependent RNA polymerase catalyzes the transcription of DNA into RNA using the four ribonucleoside triphosphates as substrates. The protein is DNA-directed RNA polymerase subunit beta of Rickettsia akari (strain Hartford).